Consider the following 205-residue polypeptide: Ras-related protein rab-6.1 (205 aa).

GTP-binding positions include 18-25 (GEQSVGKT), Thr-43, 66-70 (DTAGQ), and 124-127 (NKTD). S-geranylgeranyl cysteine attachment occurs at residues Cys-203 and Cys-205. Cys-205 is subject to Cysteine methyl ester.

Belongs to the small GTPase superfamily. Rab family. As to quaternary structure, interacts with GARP complex component vps-52. Highly expressed in body wall muscle, intestine, somatic gonad, distal tip cells, vulva, and neurons including AVB, AVD, RIG, and PVC (at protein level). Not expressed in AVA and RMDV neurons.

The protein resides in the cell membrane. The protein localises to the cell projection. It is found in the dendrite. Its subcellular location is the perikaryon. It localises to the golgi apparatus. The protein resides in the cytoplasmic vesicle. The protein localises to the secretory vesicle. Its function is as follows. The small GTPases Rab are key regulators of intracellular membrane trafficking, from the formation of transport vesicles to their fusion with membranes. Rabs cycle between an inactive GDP-bound form and an active GTP-bound form that is able to recruit to membranes different set of downstream effectors directly responsible for vesicle formation, movement, tethering and fusion. In its active GTP-bound form, acts redundantly with rab-6.2 (in its active GTP-bound form) to positively regulate the retrograde trafficking of cargo molecules from endosomes to Golgi structures. Required for the retrograde trafficking of glr-1, a subunit of AMPA-type glutamate receptors (AMPRs), out of early endosomes and into the Golgi compartment in neurons. Together with rab-6.2, promotes the retrograde trafficking of mig-14 from endosomes to Golgi structures in the intestine. In oocytes, in its active GTP-bound form, involved in the membrane fusion and exocytosis of secretory vesicles (cortical granules) to play a role in the remodeling of the embryo surface following fertilization. Recruits sep-1 to cortical granules (derived from the Golgi complex) for exocytosis during the oocyte-to-embryo transition. Required for seam cell division and alae formation. Promotes spontaneous reversals in locomotion. The sequence is that of Ras-related protein rab-6.1 from Caenorhabditis elegans.